Consider the following 100-residue polypeptide: Large ribosomal subunit protein bL28 (100 aa).

The protein belongs to the bacterial ribosomal protein bL28 family.

This Ehrlichia chaffeensis (strain ATCC CRL-10679 / Arkansas) protein is Large ribosomal subunit protein bL28.